The chain runs to 116 residues: Large-conductance mechanosensitive channel (116 aa).

2 helical membrane passes run 7–27 (EFAL…GAAF) and 64–84 (GLFI…FIFV).

Belongs to the MscL family. Homopentamer.

The protein localises to the cell membrane. Channel that opens in response to stretch forces in the membrane lipid bilayer. May participate in the regulation of osmotic pressure changes within the cell. The chain is Large-conductance mechanosensitive channel from Staphylococcus epidermidis (strain ATCC 35984 / DSM 28319 / BCRC 17069 / CCUG 31568 / BM 3577 / RP62A).